A 354-amino-acid polypeptide reads, in one-letter code: Methylthioribose-1-phosphate isomerase (354 aa).

Residues 58–60 (RGA), R101, and Q204 each bind substrate. The Proton donor role is filled by D245. 255 to 256 (NK) contributes to the substrate binding site.

The protein belongs to the eIF-2B alpha/beta/delta subunits family. MtnA subfamily.

It carries out the reaction 5-(methylsulfanyl)-alpha-D-ribose 1-phosphate = 5-(methylsulfanyl)-D-ribulose 1-phosphate. The protein operates within amino-acid biosynthesis; L-methionine biosynthesis via salvage pathway; L-methionine from S-methyl-5-thio-alpha-D-ribose 1-phosphate: step 1/6. Functionally, catalyzes the interconversion of methylthioribose-1-phosphate (MTR-1-P) into methylthioribulose-1-phosphate (MTRu-1-P). In Xanthomonas campestris pv. campestris (strain ATCC 33913 / DSM 3586 / NCPPB 528 / LMG 568 / P 25), this protein is Methylthioribose-1-phosphate isomerase.